Consider the following 197-residue polypeptide: Shikimate kinase (197 aa).

15 to 20 (GSGKSS) is a binding site for ATP. Ser-19 lines the Mg(2+) pocket. The substrate site is built by Asp-37, Arg-61, and Gly-83. Arg-121 is an ATP binding site. Arg-148 contributes to the substrate binding site.

This sequence belongs to the shikimate kinase family. As to quaternary structure, monomer. It depends on Mg(2+) as a cofactor.

The protein localises to the cytoplasm. The enzyme catalyses shikimate + ATP = 3-phosphoshikimate + ADP + H(+). It functions in the pathway metabolic intermediate biosynthesis; chorismate biosynthesis; chorismate from D-erythrose 4-phosphate and phosphoenolpyruvate: step 5/7. Its function is as follows. Catalyzes the specific phosphorylation of the 3-hydroxyl group of shikimic acid using ATP as a cosubstrate. This is Shikimate kinase from Chlorobium phaeovibrioides (strain DSM 265 / 1930) (Prosthecochloris vibrioformis (strain DSM 265)).